The chain runs to 375 residues: Trichodiene synthase (375 aa).

It belongs to the trichodiene synthase family.

The enzyme catalyses (2E,6E)-farnesyl diphosphate = trichodiene + diphosphate. It functions in the pathway sesquiterpene biosynthesis; trichothecene biosynthesis. Functionally, TS is a member of the terpene cyclase group of enzymes. It catalyzes the isomerization and cyclization of farnesyl pyro-phosphate to form trichodiene, the first cyclic intermediate in the biosynthetic pathway for trichothecenes. It serves to branch trichothecene biosynthesis from the isoprenoid pathway. In Fusarium austroamericanum, this protein is Trichodiene synthase (TRI5).